We begin with the raw amino-acid sequence, 270 residues long: uncharacterized protein (270 aa).

The active-site Proton donor is histidine 171. Cysteine 261 serves as the catalytic Nucleophile.

The protein belongs to the DDAH family.

This is an uncharacterized protein from Aeropyrum pernix (strain ATCC 700893 / DSM 11879 / JCM 9820 / NBRC 100138 / K1).